The following is an 86-amino-acid chain: Large ribosomal subunit protein bL31B (86 aa).

Belongs to the bacterial ribosomal protein bL31 family. Type B subfamily. In terms of assembly, part of the 50S ribosomal subunit.

The polypeptide is Large ribosomal subunit protein bL31B (Salmonella agona (strain SL483)).